We begin with the raw amino-acid sequence, 428 residues long: Light-independent protochlorophyllide reductase subunit N (428 aa).

[4Fe-4S] cluster is bound by residues cysteine 29, cysteine 54, and cysteine 115.

This sequence belongs to the BchN/ChlN family. As to quaternary structure, protochlorophyllide reductase is composed of three subunits; BchL, BchN and BchB. Forms a heterotetramer of two BchB and two BchN subunits. [4Fe-4S] cluster serves as cofactor.

The enzyme catalyses chlorophyllide a + oxidized 2[4Fe-4S]-[ferredoxin] + 2 ADP + 2 phosphate = protochlorophyllide a + reduced 2[4Fe-4S]-[ferredoxin] + 2 ATP + 2 H2O. Its pathway is porphyrin-containing compound metabolism; bacteriochlorophyll biosynthesis (light-independent). Functionally, component of the dark-operative protochlorophyllide reductase (DPOR) that uses Mg-ATP and reduced ferredoxin to reduce ring D of protochlorophyllide (Pchlide) to form chlorophyllide a (Chlide). This reaction is light-independent. The NB-protein (BchN-BchB) is the catalytic component of the complex. The chain is Light-independent protochlorophyllide reductase subunit N from Cereibacter sphaeroides (strain ATCC 17023 / DSM 158 / JCM 6121 / CCUG 31486 / LMG 2827 / NBRC 12203 / NCIMB 8253 / ATH 2.4.1.) (Rhodobacter sphaeroides).